Consider the following 265-residue polypeptide: Capsule polysaccharide export inner-membrane protein CtrC (265 aa).

Helical transmembrane passes span 37–57, 67–84, 121–141, 148–168, 178–198, and 238–258; these read IGFL…VLMW, TLNI…LMMW, IAGA…IGWI, FYML…GLVI, FGKI…AFFF, and WYIV…VSKF. The region spanning 37–258 is the ABC transmembrane type-2 domain; it reads IGFLWLFVEP…LFGLAMVSKF (222 aa).

Belongs to the ABC-2 integral membrane protein family.

The protein resides in the cell inner membrane. Functionally, may form an ATP-driven capsule polysaccharide export apparatus, in association with the CtrB and CtrD proteins. The chain is Capsule polysaccharide export inner-membrane protein CtrC (ctrC) from Neisseria meningitidis serogroup B (strain ATCC BAA-335 / MC58).